A 109-amino-acid polypeptide reads, in one-letter code: Nucleoid-associated protein AHA_2212 (109 aa).

Disordered regions lie at residues 1-23 (MFGKGGMGNLMKQAQQMQERMQK) and 88-109 (NKSKMGELTGGMQLPPGFKMPF). The segment covering 11–23 (MKQAQQMQERMQK) has biased composition (low complexity).

Belongs to the YbaB/EbfC family. In terms of assembly, homodimer.

The protein resides in the cytoplasm. Its subcellular location is the nucleoid. Functionally, binds to DNA and alters its conformation. May be involved in regulation of gene expression, nucleoid organization and DNA protection. The sequence is that of Nucleoid-associated protein AHA_2212 from Aeromonas hydrophila subsp. hydrophila (strain ATCC 7966 / DSM 30187 / BCRC 13018 / CCUG 14551 / JCM 1027 / KCTC 2358 / NCIMB 9240 / NCTC 8049).